A 224-amino-acid polypeptide reads, in one-letter code: MMRVLVVEDNALLRHHLKVQLQDSGHQVDAAEDAREADYYLNEHLPDIAIVDLGLPDEDGLSLIRRWRSSDVSLPVLVLTAREGWQDKVEVLSSGADDYVTKPFHIEEVMARMQALMRRNSGLASQVINIPPFQVDLSRRELSVNEEVIKLTAFEYTIMETLIRNNGKVVSKDSLMLQLYPDAELRESHTIDVLMGRLRKKIQAQYPHDVITTVRGQGYLFELR.

The region spanning 3 to 117 (RVLVVEDNAL…EVMARMQALM (115 aa)) is the Response regulatory domain. Residue Asp52 is modified to 4-aspartylphosphate. The ompR/PhoB-type DNA-binding region spans 125–223 (SQVINIPPFQ…VRGQGYLFEL (99 aa)).

In terms of assembly, monomer in the inactive, unphosphorylated state and dimer in the active, phosphorylated state. In terms of processing, phosphorylated by PhoQ.

Its subcellular location is the cytoplasm. In terms of biological role, member of the two-component regulatory system PhoP/PhoQ which regulates the expression of genes involved in virulence, adaptation to acidic and low Mg(2+) environments and resistance to host defense antimicrobial peptides. Essential for intramacrophage survival of S.typhimurium. In low periplasmic Mg(2+), PhoQ phosphorylates PhoP, resulting in the expression of PhoP-activated genes (PAG) and repression of PhoP-repressed genes (PRG). In high periplasmic Mg(2+), PhoQ dephosphorylates phospho-PhoP, resulting in the repression of PAG and may lead to expression of some PRG. Essential for transcription of spiC inside macrophages by controlling the expression of the two-component regulatory system SsrB/SpiR (SsrA) and Pir at transcriptional and post-transcriptional levels respectively. Promotes expression of the two-component regulatory system PmrA/PmrB via activation of pmrD gene. Is required to attenuate bacterial growth within fibroblast cells and to enhance bacterial resistance to bile in intestinal cells. Negatively regulates prgH, which is required for invasion of epithelial cells. PhoP uses multiple mechanisms to promote transcription and activates promoters for PAG at low (uM range) Mg(2+) concentrations. Involved in acid tolerance. This Salmonella typhimurium (strain SL1344) protein is Virulence transcriptional regulatory protein PhoP (phoP).